Reading from the N-terminus, the 247-residue chain is Segregation and condensation protein A (247 aa).

Belongs to the ScpA family. As to quaternary structure, component of a cohesin-like complex composed of ScpA, ScpB and the Smc homodimer, in which ScpA and ScpB bind to the head domain of Smc. The presence of the three proteins is required for the association of the complex with DNA.

The protein localises to the cytoplasm. Participates in chromosomal partition during cell division. May act via the formation of a condensin-like complex containing Smc and ScpB that pull DNA away from mid-cell into both cell halves. This chain is Segregation and condensation protein A, found in Caldanaerobacter subterraneus subsp. tengcongensis (strain DSM 15242 / JCM 11007 / NBRC 100824 / MB4) (Thermoanaerobacter tengcongensis).